The sequence spans 481 residues: Cobyric acid synthase (481 aa).

The GATase cobBQ-type domain occupies 248–435 (ALTVAWLAFS…LHGMFGADGF (188 aa)). Catalysis depends on cysteine 330, which acts as the Nucleophile. The active site involves histidine 427.

Belongs to the CobB/CobQ family. CobQ subfamily.

It participates in cofactor biosynthesis; adenosylcobalamin biosynthesis. Functionally, catalyzes amidations at positions B, D, E, and G on adenosylcobyrinic A,C-diamide. NH(2) groups are provided by glutamine, and one molecule of ATP is hydrogenolyzed for each amidation. The protein is Cobyric acid synthase of Cereibacter sphaeroides (strain ATCC 17023 / DSM 158 / JCM 6121 / CCUG 31486 / LMG 2827 / NBRC 12203 / NCIMB 8253 / ATH 2.4.1.) (Rhodobacter sphaeroides).